The following is a 388-amino-acid chain: Staphopain A (388 aa).

The N-terminal stretch at 1 to 25 (MKRNFPKLIALSLIFSLSITPIANA) is a signal peptide. The propeptide occupies 26–214 (ESNSNIKAKD…TSQFKSNNYT (189 aa)). Active-site residues include Cys238, His334, and Asn355.

It belongs to the peptidase C47 family. As to quaternary structure, in the cytoplasm, prematurely activated/folded ScpA forms a stable non-covalent complex with ScpB. Post-translationally, cleavage leads to the activation of ScpA probably by an auto-catalytic manner.

It is found in the secreted. The enzyme catalyses Broad endopeptidase action on proteins including elastin, but rather limited hydrolysis of small-molecule substrates. Assays are conveniently made with hemoglobin, casein or Z-Phe-Arg-NHMec as substrate.. Prematurely activated/folded staphopain A is inhibited by staphostatin A (ScpB), which is probably required to protect staphylococcal cytoplasmic proteins from degradation by ScpA. Also inactivated by heavy metal ions such as Hg(2+) or Ag(+), iodoacetamide, E-64 and human plasma. Functionally, cysteine protease that plays an important role in the inhibition of host innate immune response. Cleaves host elastins found in connective tissues, pulmonary surfactant protein A in the lungs, and the chemokine receptor CXCR2 on leukocytes. Proteolytic cleavage of surfactant protein A impairs bacterial phagocytosis by neutrophils while CXCR2 degradation blocks neutrophil activation and chemotaxis. Additionally, promotes vascular leakage by activating the plasma kallikerin/kinin system, resulting in hypotension. The sequence is that of Staphopain A (sspP) from Staphylococcus aureus.